Here is a 202-residue protein sequence, read N- to C-terminus: Small ribosomal subunit protein uS4c (202 aa).

Positions 90 to 158 (MRSDNVIFRL…ISKNIELYQK (69 aa)) constitute an S4 RNA-binding domain.

It belongs to the universal ribosomal protein uS4 family. Part of the 30S ribosomal subunit. Contacts protein S5. The interaction surface between S4 and S5 is involved in control of translational fidelity.

It localises to the plastid. Its subcellular location is the chloroplast. Functionally, one of the primary rRNA binding proteins, it binds directly to 16S rRNA where it nucleates assembly of the body of the 30S subunit. With S5 and S12 plays an important role in translational accuracy. In Anthoceros punctatus (Hornwort), this protein is Small ribosomal subunit protein uS4c (rps4).